Consider the following 450-residue polypeptide: Phosphoglucosamine mutase 2 (450 aa).

Residue Ser101 is the Phosphoserine intermediate of the active site. Residues Ser101, Asp245, Asp247, and Asp249 each contribute to the Mg(2+) site. Residue Ser101 is modified to Phosphoserine.

This sequence belongs to the phosphohexose mutase family. It depends on Mg(2+) as a cofactor. In terms of processing, activated by phosphorylation.

It catalyses the reaction alpha-D-glucosamine 1-phosphate = D-glucosamine 6-phosphate. Catalyzes the conversion of glucosamine-6-phosphate to glucosamine-1-phosphate. The chain is Phosphoglucosamine mutase 2 from Shewanella sp. (strain MR-4).